We begin with the raw amino-acid sequence, 328 residues long: Tetraacyldisaccharide 4'-kinase (328 aa).

55 to 62 serves as a coordination point for ATP; the sequence is TAGGNGKT.

This sequence belongs to the LpxK family.

The catalysed reaction is a lipid A disaccharide + ATP = a lipid IVA + ADP + H(+). The protein operates within glycolipid biosynthesis; lipid IV(A) biosynthesis; lipid IV(A) from (3R)-3-hydroxytetradecanoyl-[acyl-carrier-protein] and UDP-N-acetyl-alpha-D-glucosamine: step 6/6. In terms of biological role, transfers the gamma-phosphate of ATP to the 4'-position of a tetraacyldisaccharide 1-phosphate intermediate (termed DS-1-P) to form tetraacyldisaccharide 1,4'-bis-phosphate (lipid IVA). This Escherichia coli (strain K12 / MC4100 / BW2952) protein is Tetraacyldisaccharide 4'-kinase.